Reading from the N-terminus, the 389-residue chain is Chorismate synthase (389 aa).

NADP(+) contacts are provided by Arg41 and Arg47. FMN-binding positions include 129–131 (RSS), 247–248 (NA), Gly291, 306–310 (KPIST), and Arg332.

Belongs to the chorismate synthase family. As to quaternary structure, homotetramer. Requires FMNH2 as cofactor.

The enzyme catalyses 5-O-(1-carboxyvinyl)-3-phosphoshikimate = chorismate + phosphate. Its pathway is metabolic intermediate biosynthesis; chorismate biosynthesis; chorismate from D-erythrose 4-phosphate and phosphoenolpyruvate: step 7/7. Functionally, catalyzes the anti-1,4-elimination of the C-3 phosphate and the C-6 proR hydrogen from 5-enolpyruvylshikimate-3-phosphate (EPSP) to yield chorismate, which is the branch point compound that serves as the starting substrate for the three terminal pathways of aromatic amino acid biosynthesis. This reaction introduces a second double bond into the aromatic ring system. This chain is Chorismate synthase, found in Rubrobacter xylanophilus (strain DSM 9941 / JCM 11954 / NBRC 16129 / PRD-1).